Reading from the N-terminus, the 434-residue chain is Gamma-glutamyl phosphate reductase (434 aa).

Residues 1–11 (MTNSNEAQENA) show a composition bias toward polar residues. The interval 1–26 (MTNSNEAQENALSPERQAERDEVLAK) is disordered. A compositionally biased stretch (basic and acidic residues) spans 16-25 (RQAERDEVLA).

The protein belongs to the gamma-glutamyl phosphate reductase family.

It is found in the cytoplasm. The catalysed reaction is L-glutamate 5-semialdehyde + phosphate + NADP(+) = L-glutamyl 5-phosphate + NADPH + H(+). It participates in amino-acid biosynthesis; L-proline biosynthesis; L-glutamate 5-semialdehyde from L-glutamate: step 2/2. Catalyzes the NADPH-dependent reduction of L-glutamate 5-phosphate into L-glutamate 5-semialdehyde and phosphate. The product spontaneously undergoes cyclization to form 1-pyrroline-5-carboxylate. The polypeptide is Gamma-glutamyl phosphate reductase (Corynebacterium jeikeium (strain K411)).